A 400-amino-acid polypeptide reads, in one-letter code: GDNF family receptor alpha-3 (400 aa).

The first 31 residues, 1-31 (MVRPLNPRPLPPVVLMLLLLLPPSPLPLAAG), serve as a signal peptide directing secretion. Cysteines 51 and 57 form a disulfide. 2 N-linked (GlcNAc...) asparagine glycosylation sites follow: Asn-95 and Asn-148. 10 cysteine pairs are disulfide-bonded: Cys-162/Cys-218, Cys-169/Cys-175, Cys-186/Cys-196, Cys-191/Cys-239, Cys-220/Cys-227, Cys-248/Cys-316, Cys-255/Cys-261, Cys-272/Cys-288, Cys-281/Cys-340, and Cys-318/Cys-328. Asn-309 carries an N-linked (GlcNAc...) asparagine glycan. Asn-374 carries GPI-anchor amidated asparagine lipidation. A propeptide spans 375-400 (PAVRPQPWVPSLFSCTLPLILLLSLW) (removed in mature form).

Belongs to the GDNFR family. In terms of assembly, interacts with ARTN ligand and RET: forms a 2:2:2 ternary complex composed of ARTN ligand, GFRA3 and RET receptor. Interacts with SORL1. In terms of processing, N-glycosylated. Widely expressed in adult and fetus which exhibit a similar pattern. Essentially not expressed in the central nervous system, but highly expressed in several sensory and sympathetic ganglia of the peripheral nervous system. Moderate expression in many non-neuronal tissues, particularly those of the digestive and urogenital systems, but high expression in stomach and appendix. Several types of glandular tissues show low expression. Very low or no expression detected in the hematopoietic system.

It localises to the cell membrane. Functionally, receptor for artemin (ARTN), a growth factor that supports the survival of sensory and sympathetic peripheral neurons. ARTN-binding leads to autophosphorylation and activation of the RET receptor. The protein is GDNF family receptor alpha-3 (GFRA3) of Homo sapiens (Human).